Reading from the N-terminus, the 337-residue chain is 2-oxoglutarate-dependent ethylene/succinate-forming enzyme (337 aa).

The Fe2OG dioxygenase domain maps to 166-286 (GWHHMRVLRF…RFACAYFHEP (121 aa)). 2 residues coordinate Fe cation: histidine 189 and histidine 268.

It belongs to the iron/ascorbate-dependent oxidoreductase family. In terms of assembly, monomer. It depends on Fe(2+) as a cofactor.

The catalysed reaction is 2-oxoglutarate + O2 + 2 H(+) = ethene + 3 CO2 + H2O. It carries out the reaction L-arginine + 2-oxoglutarate + O2 = guanidine + L-glutamate 5-semialdehyde + succinate + CO2. It participates in alkene biosynthesis; ethylene biosynthesis via 2-oxoglutarate. Simultaneously catalyzes two reactions, namely formation of ethylene and of succinate from 2-oxoglutarate. The polypeptide is 2-oxoglutarate-dependent ethylene/succinate-forming enzyme (efe) (Pseudomonas syringae pv. pisi).